The chain runs to 262 residues: Hydroxyethylthiazole kinase (262 aa).

Residue methionine 50 coordinates substrate. Positions 125 and 171 each coordinate ATP. A substrate-binding site is contributed by glycine 198.

It belongs to the Thz kinase family. Mg(2+) serves as cofactor.

It catalyses the reaction 5-(2-hydroxyethyl)-4-methylthiazole + ATP = 4-methyl-5-(2-phosphooxyethyl)-thiazole + ADP + H(+). It functions in the pathway cofactor biosynthesis; thiamine diphosphate biosynthesis; 4-methyl-5-(2-phosphoethyl)-thiazole from 5-(2-hydroxyethyl)-4-methylthiazole: step 1/1. Functionally, catalyzes the phosphorylation of the hydroxyl group of 4-methyl-5-beta-hydroxyethylthiazole (THZ). This is Hydroxyethylthiazole kinase from Escherichia coli (strain SMS-3-5 / SECEC).